Consider the following 189-residue polypeptide: Protein OXIDATIVE STRESS 3 LIKE 2 (189 aa).

2 disordered regions span residues 22–49 (SSST…SSYN) and 128–147 (AMSQ…LPTL). Over residues 33 to 44 (NSDDDEGGENEI) the composition is skewed to acidic residues.

Its subcellular location is the nucleus. The polypeptide is Protein OXIDATIVE STRESS 3 LIKE 2 (Arabidopsis thaliana (Mouse-ear cress)).